Consider the following 201-residue polypeptide: Beta-lactamase inhibitory protein (201 aa).

The signal sequence occupies residues 1 to 36; sequence MRTVGIGAGVRRLGRAVVMAAAVGGLVLGSAGASNA. 2 consecutive repeat copies span residues 37–112 and 116–201. 2 cysteine pairs are disulfide-bonded: C66–C78 and C145–C167.

Interacts with E.coli beta-lactamase TEM-1; interaction inhibits hydrolysis of beta-lactam antibiotics. Interacts with K.pneumoniae beta-lactamase SHV-1. Interacts with K.pneumoniae beta-lactamases KPC-2 and KPC-3; interaction inhibits hydrolysis of beta-lactam antibiotics. Interacts with E.coli beta-lactamases CTX-M-14 and CTX-M-15; interaction inhibits hydrolysis of beta-lactam antibiotics.

It is found in the secreted. Its function is as follows. Inhibits a wide variety of beta lactamases. This Streptomyces clavuligerus protein is Beta-lactamase inhibitory protein.